A 1016-amino-acid chain; its full sequence is Formate dehydrogenase-O major subunit (1016 aa).

The segment at residues 1–33 is a signal peptide (tat-type signal); sequence MQVSRRQFFKICAGGMAGTTAAALGFAPSVALA. The 4Fe-4S Mo/W bis-MGD-type domain occupies 43-106; that stretch reads TRETRNTCTY…GLVDFIHSES (64 aa). The [4Fe-4S] cluster site is built by Cys-50, Cys-53, Cys-57, and Cys-92. Position 196 (Sec-196) is a non-standard amino acid, selenocysteine.

Belongs to the prokaryotic molybdopterin-containing oxidoreductase family. In terms of assembly, formate dehydrogenase is a membrane-bound complex, formed by subunits alpha, beta and gamma. It depends on Mo-bis(molybdopterin guanine dinucleotide) as a cofactor. [4Fe-4S] cluster is required as a cofactor. Exported by the Tat system. The position of the signal peptide cleavage has not been experimentally proven.

The protein resides in the periplasm. The enzyme catalyses formate + NAD(+) = CO2 + NADH. In terms of biological role, allows to use formate as major electron donor during aerobic respiration. Subunit alpha possibly forms the active site. The protein is Formate dehydrogenase-O major subunit (fdoG) of Escherichia coli (strain K12).